Reading from the N-terminus, the 494-residue chain is Lysine--tRNA ligase (494 aa).

Mg(2+) contacts are provided by E407 and E414.

It belongs to the class-II aminoacyl-tRNA synthetase family. Homodimer. Mg(2+) is required as a cofactor.

The protein localises to the cytoplasm. The enzyme catalyses tRNA(Lys) + L-lysine + ATP = L-lysyl-tRNA(Lys) + AMP + diphosphate. The polypeptide is Lysine--tRNA ligase (Lactococcus lactis subsp. lactis (strain IL1403) (Streptococcus lactis)).